We begin with the raw amino-acid sequence, 248 residues long: Putative insertion sequence ATP-binding protein y4uH (248 aa).

106–113 serves as a coordination point for ATP; that stretch reads GPTGIGKS.

The protein belongs to the IS21/IS1162 putative ATP-binding protein family.

The protein is Putative insertion sequence ATP-binding protein y4uH of Sinorhizobium fredii (strain NBRC 101917 / NGR234).